The primary structure comprises 859 residues: Cadherin-related family member 1 (859 aa).

The N-terminal stretch at 1-21 (MRRGPQVALVLGLLCIYLAQA) is a signal peptide. Residues 22-701 (NFAPHFFDNG…LIQTKDNPMK (680 aa)) lie on the Extracellular side of the membrane. Cadherin domains are found at residues 36-135 (NGNM…APRF), 136-247 (LQEP…APIF), 248-354 (VGTP…PPTF), 360-473 (PQNK…VPKF), 474-577 (TSHY…YPQF), and 569-691 (DVND…MAAF). N-linked (GlcNAc...) asparagine glycosylation is found at Asn-58 and Asn-89. Residues Asn-288 and Asn-297 are each glycosylated (N-linked (GlcNAc...) asparagine). A helical membrane pass occupies residues 702–722 (AVGVLAGVMAIVVAITVLIST). Residues 723–859 (ATFWRNKKSN…KKSLGNKAYV (137 aa)) are Cytoplasmic-facing. The tract at residues 789–859 (PPRAPALPPP…KKSLGNKAYV (71 aa)) is disordered. The span at 790-800 (PRAPALPPPPK) shows a compositional bias: pro residues. Over residues 802–816 (ASSTVAQQTVPTVSG) the composition is skewed to polar residues. Residues 817–827 (SLTPQPSQQLP) show a composition bias toward low complexity.

In terms of assembly, interacts with PROM1. Post-translationally, undergoes proteolytic cleavage; produces a soluble 95 kDa N-terminal fragment and a 25 kDa cell-associated C-terminal fragment. As to expression, expressed in the retina. Strongly expressed by the mitral and tufted cells in the main and accessory olfactory bulbs. Also expressed in the septum and olfactory cortex. Weakly expressed in the triangular septal nucleus and piriform cortex.

The protein resides in the cell membrane. Its function is as follows. Potential calcium-dependent cell-adhesion protein. May be required for the structural integrity of the outer segment (OS) of photoreceptor cells. This is Cadherin-related family member 1 (Cdhr1) from Rattus norvegicus (Rat).